The following is a 187-amino-acid chain: Probable carboxylesterase Culp7 (187 aa).

A disulfide bond links Cys15 and Cys69. Residue Ser80 is the Nucleophile of the active site. An intrachain disulfide couples Cys151 to Cys158. Residue Asp155 is part of the active site. His167 (proton donor/acceptor) is an active-site residue.

This sequence belongs to the cutinase family.

It localises to the cytoplasm. The protein resides in the cell membrane. It is found in the secreted. The protein localises to the cell wall. Functionally, may have a role in cell wall processes. Does not exhibit cutinase activity. This Mycobacterium tuberculosis (strain ATCC 25618 / H37Rv) protein is Probable carboxylesterase Culp7.